The chain runs to 165 residues: uncharacterized protein (165 aa).

A helical membrane pass occupies residues 15 to 35 (MSPAIILIGVLILIVLFVIKF). Residues 67–119 (ISQLNTLRATLAAKKKELKTLRTARKKECTEQLAKTQAEVDRIQAKIDNFSSR) adopt a coiled-coil conformation. The interval 123–156 (VPLPGGEVGPPYNPPPPRTNTRPNPRPNPRPAQL) is disordered. The segment covering 133 to 154 (PYNPPPPRTNTRPNPRPNPRPA) has biased composition (pro residues).

It localises to the membrane. This is an uncharacterized protein from Acheta domesticus (House cricket).